The chain runs to 581 residues: Proline--tRNA ligase (581 aa).

This sequence belongs to the class-II aminoacyl-tRNA synthetase family. ProS type 1 subfamily. In terms of assembly, homodimer.

The protein localises to the cytoplasm. It catalyses the reaction tRNA(Pro) + L-proline + ATP = L-prolyl-tRNA(Pro) + AMP + diphosphate. In terms of biological role, catalyzes the attachment of proline to tRNA(Pro) in a two-step reaction: proline is first activated by ATP to form Pro-AMP and then transferred to the acceptor end of tRNA(Pro). As ProRS can inadvertently accommodate and process non-cognate amino acids such as alanine and cysteine, to avoid such errors it has two additional distinct editing activities against alanine. One activity is designated as 'pretransfer' editing and involves the tRNA(Pro)-independent hydrolysis of activated Ala-AMP. The other activity is designated 'posttransfer' editing and involves deacylation of mischarged Ala-tRNA(Pro). The misacylated Cys-tRNA(Pro) is not edited by ProRS. This Verminephrobacter eiseniae (strain EF01-2) protein is Proline--tRNA ligase.